The sequence spans 323 residues: Beta-ketoacyl-[acyl-carrier-protein] synthase III (323 aa).

Catalysis depends on residues C113 and H250. Residues Q251–R255 are ACP-binding. N280 is an active-site residue.

The protein belongs to the thiolase-like superfamily. FabH family. Homodimer.

The protein localises to the cytoplasm. It carries out the reaction malonyl-[ACP] + acetyl-CoA + H(+) = 3-oxobutanoyl-[ACP] + CO2 + CoA. The protein operates within lipid metabolism; fatty acid biosynthesis. Functionally, catalyzes the condensation reaction of fatty acid synthesis by the addition to an acyl acceptor of two carbons from malonyl-ACP. Catalyzes the first condensation reaction which initiates fatty acid synthesis and may therefore play a role in governing the total rate of fatty acid production. Possesses both acetoacetyl-ACP synthase and acetyl transacylase activities. Its substrate specificity determines the biosynthesis of branched-chain and/or straight-chain of fatty acids. The protein is Beta-ketoacyl-[acyl-carrier-protein] synthase III of Mesorhizobium japonicum (strain LMG 29417 / CECT 9101 / MAFF 303099) (Mesorhizobium loti (strain MAFF 303099)).